We begin with the raw amino-acid sequence, 499 residues long: Glycerol kinase (499 aa).

Thr-12 contacts ADP. ATP is bound by residues Thr-12, Thr-13, and Ser-14. Thr-12 contacts sn-glycerol 3-phosphate. Residue Arg-16 coordinates ADP. Residues Arg-82, Glu-83, Tyr-135, and Asp-245 each contribute to the sn-glycerol 3-phosphate site. Arg-82, Glu-83, Tyr-135, Asp-245, and Gln-246 together coordinate glycerol. ADP-binding residues include Thr-267 and Gly-310. The ATP site is built by Thr-267, Gly-310, Gln-314, and Gly-411. ADP contacts are provided by Gly-411 and Asn-415.

This sequence belongs to the FGGY kinase family. As to quaternary structure, homotetramer and homodimer (in equilibrium).

The catalysed reaction is glycerol + ATP = sn-glycerol 3-phosphate + ADP + H(+). Its pathway is polyol metabolism; glycerol degradation via glycerol kinase pathway; sn-glycerol 3-phosphate from glycerol: step 1/1. Activated by phosphorylation and inhibited by fructose 1,6-bisphosphate (FBP). Key enzyme in the regulation of glycerol uptake and metabolism. Catalyzes the phosphorylation of glycerol to yield sn-glycerol 3-phosphate. The protein is Glycerol kinase of Clostridium beijerinckii (strain ATCC 51743 / NCIMB 8052) (Clostridium acetobutylicum).